Here is a 433-residue protein sequence, read N- to C-terminus: Dihydroorotase (433 aa).

Residues histidine 63 and histidine 65 each contribute to the Zn(2+) site. Substrate contacts are provided by residues 65–67 and asparagine 97; that span reads HLR. The Zn(2+) site is built by aspartate 155, histidine 182, and histidine 235. Residue asparagine 283 coordinates substrate. Residue aspartate 310 participates in Zn(2+) binding. Aspartate 310 is a catalytic residue. Histidine 314 contacts substrate.

This sequence belongs to the metallo-dependent hydrolases superfamily. DHOase family. Class I DHOase subfamily. The cofactor is Zn(2+).

It catalyses the reaction (S)-dihydroorotate + H2O = N-carbamoyl-L-aspartate + H(+). Its pathway is pyrimidine metabolism; UMP biosynthesis via de novo pathway; (S)-dihydroorotate from bicarbonate: step 3/3. Its function is as follows. Catalyzes the reversible cyclization of carbamoyl aspartate to dihydroorotate. This is Dihydroorotase from Anaeromyxobacter dehalogenans (strain 2CP-C).